The primary structure comprises 453 residues: Glutamyl-tRNA(Gln) amidotransferase subunit A (453 aa).

Active-site charge relay system residues include Lys-56 and Ser-131. Ser-155 functions as the Acyl-ester intermediate in the catalytic mechanism.

It belongs to the amidase family. GatA subfamily. Heterotrimer of A, B and C subunits.

The catalysed reaction is L-glutamyl-tRNA(Gln) + L-glutamine + ATP + H2O = L-glutaminyl-tRNA(Gln) + L-glutamate + ADP + phosphate + H(+). Allows the formation of correctly charged Gln-tRNA(Gln) through the transamidation of misacylated Glu-tRNA(Gln) in organisms which lack glutaminyl-tRNA synthetase. The reaction takes place in the presence of glutamine and ATP through an activated gamma-phospho-Glu-tRNA(Gln). This is Glutamyl-tRNA(Gln) amidotransferase subunit A from Campylobacter fetus subsp. fetus (strain 82-40).